The chain runs to 338 residues: Holliday junction branch migration complex subunit RuvB (338 aa).

The segment at 1–181 (MTTRTISPEK…FGVISRLEFY (181 aa)) is large ATPase domain (RuvB-L). Residues Leu-20, Arg-21, Gly-62, Lys-65, Thr-66, Thr-67, 128-130 (EDF), Arg-171, Tyr-181, and Arg-218 each bind ATP. Position 66 (Thr-66) interacts with Mg(2+). A small ATPAse domain (RuvB-S) region spans residues 182-252 (TDAELSTIVT…VVDESLKLLE (71 aa)). Residues 255–338 (EKGFDQMDRT…APAPGQGALF (84 aa)) form a head domain (RuvB-H) region. 3 residues coordinate DNA: Arg-291, Arg-310, and Arg-315.

This sequence belongs to the RuvB family. Homohexamer. Forms an RuvA(8)-RuvB(12)-Holliday junction (HJ) complex. HJ DNA is sandwiched between 2 RuvA tetramers; dsDNA enters through RuvA and exits via RuvB. An RuvB hexamer assembles on each DNA strand where it exits the tetramer. Each RuvB hexamer is contacted by two RuvA subunits (via domain III) on 2 adjacent RuvB subunits; this complex drives branch migration. In the full resolvosome a probable DNA-RuvA(4)-RuvB(12)-RuvC(2) complex forms which resolves the HJ.

It is found in the cytoplasm. It carries out the reaction ATP + H2O = ADP + phosphate + H(+). In terms of biological role, the RuvA-RuvB-RuvC complex processes Holliday junction (HJ) DNA during genetic recombination and DNA repair, while the RuvA-RuvB complex plays an important role in the rescue of blocked DNA replication forks via replication fork reversal (RFR). RuvA specifically binds to HJ cruciform DNA, conferring on it an open structure. The RuvB hexamer acts as an ATP-dependent pump, pulling dsDNA into and through the RuvAB complex. RuvB forms 2 homohexamers on either side of HJ DNA bound by 1 or 2 RuvA tetramers; 4 subunits per hexamer contact DNA at a time. Coordinated motions by a converter formed by DNA-disengaged RuvB subunits stimulates ATP hydrolysis and nucleotide exchange. Immobilization of the converter enables RuvB to convert the ATP-contained energy into a lever motion, pulling 2 nucleotides of DNA out of the RuvA tetramer per ATP hydrolyzed, thus driving DNA branch migration. The RuvB motors rotate together with the DNA substrate, which together with the progressing nucleotide cycle form the mechanistic basis for DNA recombination by continuous HJ branch migration. Branch migration allows RuvC to scan DNA until it finds its consensus sequence, where it cleaves and resolves cruciform DNA. The protein is Holliday junction branch migration complex subunit RuvB of Geobacter sulfurreducens (strain ATCC 51573 / DSM 12127 / PCA).